Here is a 596-residue protein sequence, read N- to C-terminus: Uptake hydrogenase large subunit (596 aa).

C75, C78, C575, and C578 together coordinate Ni(2+).

Belongs to the [NiFe]/[NiFeSe] hydrogenase large subunit family. Heterodimer of a large and a small subunit. It depends on Ni(2+) as a cofactor.

It is found in the cell membrane. It carries out the reaction H2 + A = AH2. This enzyme recycles the H(2) produced by nitrogenase to increase the production of ATP and to protect nitrogenase against inhibition or damage by O(2) under carbon- or phosphate-limited conditions. The sequence is that of Uptake hydrogenase large subunit (hupB) from Bradyrhizobium diazoefficiens (strain JCM 10833 / BCRC 13528 / IAM 13628 / NBRC 14792 / USDA 110).